Reading from the N-terminus, the 1401-residue chain is MSDLLGILKQQGQSEEFDAIKIALASPELIRSWSYGEVKKPETINYRTFKPERDGLFCAKTFGPVKDYECLCGKYKRLKHRGVICEKCGVELALAKVRRERMGHIELASPVAHIWFLKSLPSRIGLLLDMTLRDIERVLYFEAFVVVDPGMTELERGQLLNDEAYLDAMEQYGDEFDARMGAEAIRDLLRQIDLEDEIRNLREELPTTNSETKIKKITKRLKLLEAFYESGNKPEWMIMDVLPVLPPDLRPLVPLDGGRFATSDLNDLYRRVINRNNRLKRLLDLNAPDIIVRNEKRMLQESVDALLDNGRRGRAITGTNKRPLKSLADMIKGKQGRFRQNLLGKRVDYSGRSVIVVGPTLKLHQCGLPKKMALELFKPFIFSKLEFRGLATTIKAAKKMVEREESVVWDILDDVIREHPILLNRAPTLHRLGIQAFEPVLIEGKAIQLHPLVCTAYNADFDGDQMAVHVPLTLEAQLEARSLMMSTNNILSPASGEPIIVPSQDVVLGLYYLTREKVNALGEGKIYSSAQEAQNFYEAGHLDIHAKIKIRMPKEDGETGYHLVETTVGRAILAEILPKGMPFDYINRTMTKKVISKVIDSCYRKFGLKETVIFADQLMYTGFKYATRSGASIGIEDMEIPDDKASIIEHADNEVREIESQFRSGLVTNGERYNKVIDIWSRTNELVAKSMMSKIATEEVTDAKGNKVRQESFNPIFMMADSGARGSAAQIRQLAGMRGLMAAPDGSIIETPITANFREGLNVFQYFISTHGARKGLADTALKTANSGYLTRRLVDVAQDVVITEDDCGTDTGILMQPLIEGGDIVEPLHERVLGRVVASDVYIPTQTEPVVKAGTLLDEEWVEKLEKHGVDQVMVRSPITCQTRFGLCAKCYGRDLARGHLVNTGEAVGIIAAQSIGEPGTQLTMRTFHIGGAASRATAANNIQIKTKGVIRLHNIKTVTHENKNLVAVSRSGEVTIVDEFGRERERYKVPYGAVISAQDNSPVEAGQVIATWDPHTHPVISEVSGRLKFVDLIDGITMNRQTDELTGLSNIVIIDAKQRSAAGRDLRPMVKLVTDEGDDIYLAGTNVPAQYYLPVDAIVNFEDGSLVGIGDVIARIPQERSKTRDITGGLPRVADLFEARKPKDSAVMAEVSGLVNFGKETKGKRRLIINVSEDQCHEELIPKWRHISVFEGEHVERGEIIAEGALNPHDILRLLGVGALANYIVNEVQDVYRLQGVKINDKHIEVIVRQMLRKRVITFAGDSKFLVGEQVEESAMLQENDKLLAEGKQIARGTPILLGITKASLATESFISAASFQETTRVLTEAAVSGKVDELRGLKENVMVGRLIPAGTGYTYHQSRKAKRARAAAGGDSSATHTVTASDVEHALSEALNADNHEH.

Cys-70, Cys-72, Cys-85, and Cys-88 together coordinate Zn(2+). Positions 460, 462, and 464 each coordinate Mg(2+). Cys-808, Cys-882, Cys-889, and Cys-892 together coordinate Zn(2+).

Belongs to the RNA polymerase beta' chain family. The RNAP catalytic core consists of 2 alpha, 1 beta, 1 beta' and 1 omega subunit. When a sigma factor is associated with the core the holoenzyme is formed, which can initiate transcription. Mg(2+) serves as cofactor. The cofactor is Zn(2+).

It catalyses the reaction RNA(n) + a ribonucleoside 5'-triphosphate = RNA(n+1) + diphosphate. Functionally, DNA-dependent RNA polymerase catalyzes the transcription of DNA into RNA using the four ribonucleoside triphosphates as substrates. The polypeptide is DNA-directed RNA polymerase subunit beta' (Legionella pneumophila (strain Corby)).